The chain runs to 173 residues: C-phycocyanin beta subunit (173 aa).

N4-methylasparagine is present on asparagine 73. Cysteine 83 and cysteine 154 together coordinate (2R,3E)-phycocyanobilin.

Belongs to the phycobiliprotein family. Heterodimer of an alpha and a beta subunit. Part of 2 PBS rod complexes, the conventional PBS rod and a photosystem I-specific CpcL-PBS rod. In terms of processing, contains two covalently linked bilin chromophores.

It is found in the cellular thylakoid membrane. Light-harvesting photosynthetic bile pigment-protein from the phycobiliprotein complex (phycobilisome, PBS). Phycocyanin is the major phycobiliprotein in the PBS rod. This is C-phycocyanin beta subunit (cpcB) from Nostoc sp. (strain PCC 7120 / SAG 25.82 / UTEX 2576).